We begin with the raw amino-acid sequence, 153 residues long: Ribosome maturation factor RimP (153 aa).

It belongs to the RimP family.

Its subcellular location is the cytoplasm. In terms of biological role, required for maturation of 30S ribosomal subunits. This chain is Ribosome maturation factor RimP, found in Acidithiobacillus ferrooxidans (strain ATCC 53993 / BNL-5-31) (Leptospirillum ferrooxidans (ATCC 53993)).